The chain runs to 175 residues: Adenine phosphoribosyltransferase (175 aa).

It belongs to the purine/pyrimidine phosphoribosyltransferase family. As to quaternary structure, homodimer.

The protein localises to the cytoplasm. The enzyme catalyses AMP + diphosphate = 5-phospho-alpha-D-ribose 1-diphosphate + adenine. It functions in the pathway purine metabolism; AMP biosynthesis via salvage pathway; AMP from adenine: step 1/1. Catalyzes a salvage reaction resulting in the formation of AMP, that is energically less costly than de novo synthesis. The polypeptide is Adenine phosphoribosyltransferase (Clavibacter michiganensis subsp. michiganensis (strain NCPPB 382)).